A 1427-amino-acid polypeptide reads, in one-letter code: ATP-binding cassette transporter abc1 (1427 aa).

A helical membrane pass occupies residues 26–46; it reads LLLFYLSLFSLTNLFLIQKLF. A glycan (N-linked (GlcNAc...) asparagine) is linked at asparagine 49. 9 helical membrane passes run 63–83, 87–107, 115–135, 155–175, 197–217, 262–282, 298–318, 345–367, and 397–417; these read CLLEYIQIILSIVSAALSFYL, AVWWAIRTITHLEIVGLNILS, LFSWISVANAFGLLLLRLISI, LLLPLAYNITLFLLVIIPLFF, CSIFSLIFTYGWLNGIIWKSW, ILLMVFLSVLVSSTLFVTPLA, GNSPFLWVFVLLIGPYLASVV, VLTSKTLFVAVDGSKINLDYVYN, and MYFLYQLLGWSAYVGLLLAIL. The region spanning 262-549 is the ABC transmembrane type-1 1 domain; sequence ILLMVFLSVL…LASVSRQFIQ (288 aa). An N-linked (GlcNAc...) asparagine glycan is attached at asparagine 437. The next 2 helical transmembrane spans lie at 489–509 and 513–533; these read IIFKSGMKIAPFISMFITFAI and IMGHQLTPATAFTSISMFGLL. Residues asparagine 567, asparagine 581, and asparagine 601 are each glycosylated (N-linked (GlcNAc...) asparagine). Positions 579-807 constitute an ABC transporter 1 domain; the sequence is FENTSLSWSP…PSTFFSSNTK (229 aa). A helical transmembrane segment spans residues 609 to 629; that stretch reads FTLVVGSTGSGKSTLAMALLG. Residue 614–621 coordinates ATP; it reads GSTGSGKS. N-linked (GlcNAc...) asparagine glycosylation is found at asparagine 658 and asparagine 703. The helical transmembrane segment at 760–780 threads the bilayer; the sequence is IILFTHNVSLCLPIAENVIVL. N-linked (GlcNAc...) asparagine glycans are attached at residues asparagine 782 and asparagine 842. The region spanning 862–1142 is the ABC transmembrane type-1 2 domain; the sequence is ILGSILLVMM…FVRANNEILT (281 aa). A run of 3 helical transmembrane segments spans residues 866-886, 896-916, and 973-993; these read ILLVMMSQVSLASIHFWIALW, LPSSFSFLWGYAILLFIYFLM, and LLWASLEGMLLCVMAILITML. N-linked (GlcNAc...) asparagine glycosylation is present at asparagine 994. The next 3 membrane-spanning stretches (helical) occupy residues 995 to 1015, 1086 to 1106, and 1114 to 1134; these read VTLVMPIFMVPAAFVSLLVYL, LAIRTDGISGLVGFSTGLIAL, and GLVGFSLNSAIGFNISVLVFV. N-linked (GlcNAc...) asparagine glycosylation is found at asparagine 1161 and asparagine 1184. The region spanning 1180 to 1422 is the ABC transporter 2 domain; sequence VSIKNLTVSY…RRAFWKMCKE (243 aa). Position 1214–1221 (1214–1221) interacts with ATP; the sequence is GRTGSGKS. The helical transmembrane segment at 1223 to 1243 threads the bilayer; sequence MGLTLLRFTMIMSGAVEVDGI. N-linked (GlcNAc...) asparagine glycosylation occurs at asparagine 1324.

Belongs to the ABC transporter superfamily. ABCC family. Conjugate transporter (TC 3.A.1.208) subfamily.

The protein resides in the membrane. The protein is ATP-binding cassette transporter abc1 (abc1) of Schizosaccharomyces pombe (strain 972 / ATCC 24843) (Fission yeast).